The sequence spans 301 residues: MASRFRHAALVGKYQAPGSRQVLASVAEFLTNQGLEVSLDTTTAMAVGLPDYGALDAAQIGKHCDLAVVVGGDGTMLGTARQLARYGVPLIGINQGRLGFMTDIPMAEFRETIAPMIAGDYEEEHRTMLEGCVKRPSGDEFDVIYETFAVNDVVVSRGASAGMVELRVDVQDQFVANFRADGLIISSPTGSTAYALSAGGPILHPGISGWLMVPIAPHALSNRPIVLPDDSEVRIEIVAGRDASVNFDHQSLASLLHGDRICVRRSEHRVRVLHPRGWNFYATLRRKLHWNEGVLPDGAHS.

The active-site Proton acceptor is the D73. Residues D73 to G74, N151 to D152, R179, D181, T192 to S197, A216, and Q250 each bind NAD(+).

Belongs to the NAD kinase family. The cofactor is a divalent metal cation.

It is found in the cytoplasm. It carries out the reaction NAD(+) + ATP = ADP + NADP(+) + H(+). In terms of biological role, involved in the regulation of the intracellular balance of NAD and NADP, and is a key enzyme in the biosynthesis of NADP. Catalyzes specifically the phosphorylation on 2'-hydroxyl of the adenosine moiety of NAD to yield NADP. This Methylibium petroleiphilum (strain ATCC BAA-1232 / LMG 22953 / PM1) protein is NAD kinase.